The following is a 218-amino-acid chain: Guanylate kinase (218 aa).

Residues G10–T190 enclose the Guanylate kinase-like domain. Residue S17–S24 coordinates ATP.

Belongs to the guanylate kinase family.

It localises to the cytoplasm. The catalysed reaction is GMP + ATP = GDP + ADP. Essential for recycling GMP and indirectly, cGMP. This is Guanylate kinase from Jannaschia sp. (strain CCS1).